The primary structure comprises 281 residues: Pantothenate synthetase (281 aa).

30–37 (MGNLHQGH) lines the ATP pocket. Residue H37 is the Proton donor of the active site. Q61 contributes to the (R)-pantoate binding site. Q61 serves as a coordination point for beta-alanine. ATP is bound at residue 149 to 152 (GNKD). Position 155 (Q155) interacts with (R)-pantoate. ATP contacts are provided by residues I178 and 186–189 (MSSR).

The protein belongs to the pantothenate synthetase family. As to quaternary structure, homodimer.

It localises to the cytoplasm. It carries out the reaction (R)-pantoate + beta-alanine + ATP = (R)-pantothenate + AMP + diphosphate + H(+). It participates in cofactor biosynthesis; (R)-pantothenate biosynthesis; (R)-pantothenate from (R)-pantoate and beta-alanine: step 1/1. Functionally, catalyzes the condensation of pantoate with beta-alanine in an ATP-dependent reaction via a pantoyl-adenylate intermediate. The sequence is that of Pantothenate synthetase from Shewanella baltica (strain OS185).